Consider the following 442-residue polypeptide: G-protein coupled receptor family C group 5 member C (442 aa).

Positions 1-23 (MAIHRTVLMCLGLPLFLLPGARA) are cleaved as a signal peptide. Residues 24–50 (QEQAPPGCSPDLNPLYYNLCDRSEAWG) are Extracellular-facing. The helical transmembrane segment at 51–71 (IILEAVAGAGVVTTFVLTIIL) threads the bilayer. Residues 72 to 85 (VASLPFVQDTKKRS) are Cytoplasmic-facing. The chain crosses the membrane as a helical span at residues 86 to 106 (LLGTQVFFLLGTLGLFCLVFA). At 107–120 (CVVKPSFSTCASRR) the chain is on the extracellular side. A helical transmembrane segment spans residues 121–141 (FLFGVLFAICFSCLVAHVLAL). Residues 142–155 (HFLVRKNHGPRGWV) are Cytoplasmic-facing. A helical transmembrane segment spans residues 156 to 176 (IFLVALLLSLVEVIINTEWLI). Residues 177–209 (ITLVRGAGTEGDALGNGSAGWVAVSPCAIANAD) lie on the Extracellular side of the membrane. N192 is a glycosylation site (N-linked (GlcNAc...) asparagine). A helical membrane pass occupies residues 210–230 (FVMALIYVMLLLLCAFSGAWS). Topologically, residues 231–242 (ALCGRFKRWRKH) are cytoplasmic. Residues 243–263 (GVFILLTTTASIAVWVVWIVM) traverse the membrane as a helical segment. Over 264 to 280 (YTYGNRQHNSPTWDDPT) the chain is Extracellular. A helical transmembrane segment spans residues 281–301 (LAIALATNAWAFVLFYVIPEV). The Cytoplasmic portion of the chain corresponds to 302 to 442 (SQVTRSSPEQ…QVFRNPYVWD (141 aa)). 4 positions are modified to phosphoserine: S345, S384, S404, and S407. Y415 is modified (phosphotyrosine). A Phosphothreonine modification is found at T424.

The protein belongs to the G-protein coupled receptor 3 family.

It is found in the cell membrane. In terms of biological role, this retinoic acid-inducible G-protein coupled receptor provide evidence for a possible interaction between retinoid and G-protein signaling pathways. This chain is G-protein coupled receptor family C group 5 member C (GPRC5C), found in Bos taurus (Bovine).